A 149-amino-acid polypeptide reads, in one-letter code: Arginine repressor (149 aa).

It belongs to the ArgR family.

It localises to the cytoplasm. It participates in amino-acid biosynthesis; L-arginine biosynthesis [regulation]. In terms of biological role, regulates arginine biosynthesis genes. This chain is Arginine repressor, found in Alkaliphilus oremlandii (strain OhILAs) (Clostridium oremlandii (strain OhILAs)).